Reading from the N-terminus, the 398-residue chain is Enolase (398 aa).

Glutamine 154 is a binding site for (2R)-2-phosphoglycerate. The active-site Proton donor is the glutamate 196. Positions 232, 273, and 300 each coordinate Mg(2+). (2R)-2-phosphoglycerate is bound by residues lysine 325, arginine 354, serine 355, and lysine 376. The Proton acceptor role is filled by lysine 325.

The protein belongs to the enolase family. Mg(2+) is required as a cofactor.

Its subcellular location is the cytoplasm. The protein localises to the secreted. The protein resides in the cell surface. It catalyses the reaction (2R)-2-phosphoglycerate = phosphoenolpyruvate + H2O. The protein operates within carbohydrate degradation; glycolysis; pyruvate from D-glyceraldehyde 3-phosphate: step 4/5. In terms of biological role, catalyzes the reversible conversion of 2-phosphoglycerate (2-PG) into phosphoenolpyruvate (PEP). It is essential for the degradation of carbohydrates via glycolysis. The sequence is that of Enolase from Halobacterium salinarum (strain ATCC 700922 / JCM 11081 / NRC-1) (Halobacterium halobium).